The primary structure comprises 108 residues: uncharacterized protein (108 aa).

The next 2 helical transmembrane spans lie at 51–71 (VFAA…FCFL) and 86–106 (PLST…KSLL).

It is found in the membrane. This is an uncharacterized protein from Saccharomyces cerevisiae (strain ATCC 204508 / S288c) (Baker's yeast).